A 524-amino-acid chain; its full sequence is Peptide chain release factor 3 (524 aa).

The region spanning 9–275 (QRRRTFAIIS…AVVELSPPPL (267 aa)) is the tr-type G domain. Residues 18–25 (SHPDAGKT), 86–90 (DTPGH), and 140–143 (NKLD) contribute to the GTP site.

The protein belongs to the TRAFAC class translation factor GTPase superfamily. Classic translation factor GTPase family. PrfC subfamily.

It is found in the cytoplasm. In terms of biological role, increases the formation of ribosomal termination complexes and stimulates activities of RF-1 and RF-2. It binds guanine nucleotides and has strong preference for UGA stop codons. It may interact directly with the ribosome. The stimulation of RF-1 and RF-2 is significantly reduced by GTP and GDP, but not by GMP. The sequence is that of Peptide chain release factor 3 from Methylobacillus flagellatus (strain ATCC 51484 / DSM 6875 / VKM B-1610 / KT).